Consider the following 245-residue polypeptide: Orotidine 5'-phosphate decarboxylase (245 aa).

Residues Asp22, Lys44, 71–80 (DLKFHDIPNT), Thr131, Arg192, Gln201, Gly221, and Arg222 each bind substrate. The Proton donor role is filled by Lys73.

This sequence belongs to the OMP decarboxylase family. Type 1 subfamily. As to quaternary structure, homodimer.

The enzyme catalyses orotidine 5'-phosphate + H(+) = UMP + CO2. Its pathway is pyrimidine metabolism; UMP biosynthesis via de novo pathway; UMP from orotate: step 2/2. Functionally, catalyzes the decarboxylation of orotidine 5'-monophosphate (OMP) to uridine 5'-monophosphate (UMP). This chain is Orotidine 5'-phosphate decarboxylase, found in Yersinia pseudotuberculosis serotype O:1b (strain IP 31758).